The following is a 455-amino-acid chain: UPF0053 protein MT1890 (455 aa).

The CNNM transmembrane domain maps to 2-205 (NLTDTVATIL…ARSGALDDAT (204 aa)). The next 4 helical transmembrane spans lie at 6–26 (TVATILAILALTAGTGVFVAA), 68–88 (LGISITTLATGYLTEPLVAEL), 106–126 (LITFFALVIVTSLSMVFGELV), and 148–168 (LFSLLLTPAIRLTNGAANWIV). CBS domains lie at 224–285 (MTPR…AHTL) and 286–346 (LTTV…VRDE).

It belongs to the UPF0053 family.

It is found in the cell membrane. The sequence is that of UPF0053 protein MT1890 from Mycobacterium tuberculosis (strain CDC 1551 / Oshkosh).